The following is a 516-amino-acid chain: Katanin p60 ATPase-containing subunit A1 (516 aa).

The tract at residues 75–212 is disordered; it reads GFKSEPAAPE…DEKKFDPAGY (138 aa). Basic and acidic residues-rich tracts occupy residues 133 to 143 and 155 to 167; these read ARKDPPRRSEP and RGGR…RGDA. Gly residues predominate over residues 168–178; the sequence is RSGGGGRGGAR. Residues 179 to 212 show a composition bias toward basic and acidic residues; the sequence is GSDKDKNRGGKSDKDKKAPSGEEGDEKKFDPAGY. 274 to 281 provides a ligand contact to ATP; sequence GPPGTGKT.

This sequence belongs to the AAA ATPase family. Katanin p60 subunit A1 subfamily. As to quaternary structure, can homooligomerize into hexameric rings, which may be promoted by interaction with microtubules. Interacts with KATNB1, which may serve as a targeting subunit.

It localises to the cytoplasm. It is found in the cytoskeleton. The protein localises to the microtubule organizing center. Its subcellular location is the centrosome. The protein resides in the spindle pole. It catalyses the reaction n ATP + n H2O + a microtubule = n ADP + n phosphate + (n+1) alpha/beta tubulin heterodimers.. ATPase activity is stimulated by microtubules, which promote homooligomerization. ATP-dependent microtubule severing is stimulated by interaction with KATNB1. Functionally, catalytic subunit of a complex which severs microtubules in an ATP-dependent manner. Microtubule severing may promote rapid reorganization of cellular microtubule arrays and the release of microtubules from the centrosome following nucleation. In mitotic spindles this could allow depolymerization of the microtubule end proximal to the centrosome, and subsequent poleward microtubule flux. The chain is Katanin p60 ATPase-containing subunit A1 from Strongylocentrotus purpuratus (Purple sea urchin).